The sequence spans 141 residues: Small ribosomal subunit protein eS12 (141 aa).

It belongs to the eukaryotic ribosomal protein eS12 family. Component of the small ribosomal subunit. Mature ribosomes consist of a small (40S) and a large (60S) subunit. The 40S subunit contains about 32 different proteins and 1 molecule of RNA (18S). The 60S subunit contains about 42 different proteins and 3 molecules of RNA (28S, 5.8S and 5S).

The protein resides in the cytoplasm. Component of the ribosome, a large ribonucleoprotein complex responsible for the synthesis of proteins in the cell. The small ribosomal subunit (SSU) binds messenger RNAs (mRNAs) and translates the encoded message by selecting cognate aminoacyl-transfer RNA (tRNA) molecules. The large subunit (LSU) contains the ribosomal catalytic site termed the peptidyl transferase center (PTC), which catalyzes the formation of peptide bonds, thereby polymerizing the amino acids delivered by tRNAs into a polypeptide chain. The nascent polypeptides leave the ribosome through a tunnel in the LSU and interact with protein factors that function in enzymatic processing, targeting, and the membrane insertion of nascent chains at the exit of the ribosomal tunnel. The sequence is that of Small ribosomal subunit protein eS12 from Plasmodium falciparum (isolate 3D7).